The primary structure comprises 466 residues: Asparagine--tRNA ligase (466 aa).

This sequence belongs to the class-II aminoacyl-tRNA synthetase family. As to quaternary structure, homodimer.

The protein resides in the cytoplasm. It carries out the reaction tRNA(Asn) + L-asparagine + ATP = L-asparaginyl-tRNA(Asn) + AMP + diphosphate + H(+). The protein is Asparagine--tRNA ligase of Salmonella typhimurium (strain LT2 / SGSC1412 / ATCC 700720).